We begin with the raw amino-acid sequence, 133 residues long: Small ribosomal subunit protein eS8 (133 aa).

The tract at residues 1–34 (MGVWHGRSLRKPTGGRIRPHRKKRKFEMGNPPTE) is disordered.

This sequence belongs to the eukaryotic ribosomal protein eS8 family. In terms of assembly, part of the 30S ribosomal subunit.

The protein is Small ribosomal subunit protein eS8 of Methanopyrus kandleri (strain AV19 / DSM 6324 / JCM 9639 / NBRC 100938).